The following is a 104-amino-acid chain: Large ribosomal subunit protein uL24 (104 aa).

It belongs to the universal ribosomal protein uL24 family. As to quaternary structure, part of the 50S ribosomal subunit.

In terms of biological role, one of two assembly initiator proteins, it binds directly to the 5'-end of the 23S rRNA, where it nucleates assembly of the 50S subunit. Its function is as follows. One of the proteins that surrounds the polypeptide exit tunnel on the outside of the subunit. This chain is Large ribosomal subunit protein uL24, found in Bartonella quintana (strain Toulouse) (Rochalimaea quintana).